The following is a 409-amino-acid chain: uncharacterized protein (409 aa).

Positions 5-274 (ILIGFVGKPS…LAKQGFVKYE (270 aa)) constitute an OBG-type G domain. Residues 11–18 (GKPSSGKS) and 83–87 (DVAGL) each bind GTP.

The protein belongs to the TRAFAC class OBG-HflX-like GTPase superfamily. OBG GTPase family.

Its subcellular location is the cytoplasm. The protein localises to the nucleus. This is an uncharacterized protein from Schizosaccharomyces pombe (strain 972 / ATCC 24843) (Fission yeast).